Consider the following 260-residue polypeptide: Imidazole glycerol phosphate synthase subunit HisF (260 aa).

Residues D12 and D131 contribute to the active site.

It belongs to the HisA/HisF family. As to quaternary structure, heterodimer of HisH and HisF.

The protein localises to the cytoplasm. The enzyme catalyses 5-[(5-phospho-1-deoxy-D-ribulos-1-ylimino)methylamino]-1-(5-phospho-beta-D-ribosyl)imidazole-4-carboxamide + L-glutamine = D-erythro-1-(imidazol-4-yl)glycerol 3-phosphate + 5-amino-1-(5-phospho-beta-D-ribosyl)imidazole-4-carboxamide + L-glutamate + H(+). It functions in the pathway amino-acid biosynthesis; L-histidine biosynthesis; L-histidine from 5-phospho-alpha-D-ribose 1-diphosphate: step 5/9. In terms of biological role, IGPS catalyzes the conversion of PRFAR and glutamine to IGP, AICAR and glutamate. The HisF subunit catalyzes the cyclization activity that produces IGP and AICAR from PRFAR using the ammonia provided by the HisH subunit. The polypeptide is Imidazole glycerol phosphate synthase subunit HisF (Corynebacterium jeikeium (strain K411)).